Reading from the N-terminus, the 382-residue chain is Mannitol-1-phosphate 5-dehydrogenase (382 aa).

3–14 (AVHFGAGNIGRG) contacts NAD(+).

Belongs to the mannitol dehydrogenase family.

The enzyme catalyses D-mannitol 1-phosphate + NAD(+) = beta-D-fructose 6-phosphate + NADH + H(+). The polypeptide is Mannitol-1-phosphate 5-dehydrogenase (Aliivibrio salmonicida (strain LFI1238) (Vibrio salmonicida (strain LFI1238))).